Consider the following 438-residue polypeptide: Aspartate--tRNA(Asp) ligase (438 aa).

Position 170 (Glu170) interacts with L-aspartate. Positions 192 to 195 (QLYK) are aspartate. L-aspartate is bound at residue Arg214. Residues 214 to 216 (RAE), 222 to 224 (RHL), and Glu361 each bind ATP. Mg(2+) is bound by residues Glu361 and Ser364. The L-aspartate site is built by Ser364 and Arg368. 409 to 412 (GAER) is a binding site for ATP.

It belongs to the class-II aminoacyl-tRNA synthetase family. Type 2 subfamily. Homodimer. Mg(2+) serves as cofactor.

It is found in the cytoplasm. It catalyses the reaction tRNA(Asp) + L-aspartate + ATP = L-aspartyl-tRNA(Asp) + AMP + diphosphate. In terms of biological role, catalyzes the attachment of L-aspartate to tRNA(Asp) in a two-step reaction: L-aspartate is first activated by ATP to form Asp-AMP and then transferred to the acceptor end of tRNA(Asp). This chain is Aspartate--tRNA(Asp) ligase, found in Pyrococcus horikoshii (strain ATCC 700860 / DSM 12428 / JCM 9974 / NBRC 100139 / OT-3).